Reading from the N-terminus, the 165-residue chain is Secreted acidic protein 2 (165 aa).

Acidic residues-rich tracts occupy residues 1-58 (WSXS…DDSG) and 80-102 (ESSD…DAYN). The segment at 1 to 112 (WSXSGDDDDD…DDSQAGELNS (112 aa)) is disordered. Positions 103–112 (DDSQAGELNS) are enriched in polar residues.

As to expression, component of the acid-insoluble and acid-soluble organic matrix of the aragonitic skeleton (at protein level).

Its subcellular location is the secreted. This Acropora millepora (Staghorn coral) protein is Secreted acidic protein 2.